The primary structure comprises 302 residues: Probable alpha-L-glutamate ligase (302 aa).

The 184-residue stretch at 104-287 (LQLLSRKGLG…IAGQIIEYIE (184 aa)) folds into the ATP-grasp domain. ATP is bound by residues lysine 141, 178-179 (EY), aspartate 187, and 211-213 (RSN). Mg(2+)-binding residues include aspartate 248, glutamate 260, and asparagine 262. The Mn(2+) site is built by aspartate 248, glutamate 260, and asparagine 262.

This sequence belongs to the RimK family. Mg(2+) serves as cofactor. It depends on Mn(2+) as a cofactor.

The sequence is that of Probable alpha-L-glutamate ligase from Chromohalobacter salexigens (strain ATCC BAA-138 / DSM 3043 / CIP 106854 / NCIMB 13768 / 1H11).